Here is a 549-residue protein sequence, read N- to C-terminus: Tegument protein (549 aa).

Disordered stretches follow at residues 50 to 92 (KKKA…TASP), 353 to 391 (ETGDCSSLPNANTQTHRFPSPHKEMRPPPTNEADSCSSY), and 523 to 542 (TPIKTTSSSSPRPRNDTRSP). Polar residues-rich tracts occupy residues 75 to 84 (PQALSVPSLS) and 356 to 369 (DCSSLPNANTQTHR). Residues 523–534 (TPIKTTSSSSPR) show a composition bias toward low complexity.

This viral structural protein may have important functions, such as protein kinase activity, DNA binding, and possible transcriptional activation of immediate-early genes. This Homo sapiens (Human) protein is Tegument protein.